The primary structure comprises 71 residues: MPSIKVRENEPFDIALRRFRRICDRAGVITDVRKKEFFEKPTWVSKRMKAAAVKRTHKEMAKNRVYRKRMY.

The protein belongs to the bacterial ribosomal protein bS21 family.

This Vesicomyosocius okutanii subsp. Calyptogena okutanii (strain HA) protein is Small ribosomal subunit protein bS21.